Here is a 7913-residue protein sequence, read N- to C-terminus: Nonribosomal peptide synthetase dtxS1 (7913 aa).

Positions 263-662 (FEQRSRAHPN…GRNDNQVKIR (400 aa)) are adenylation 1. In terms of domain architecture, Carrier 1 spans 789-865 (QPLSEVEKQV…NVAGQARRTT (77 aa)). Ser-826 bears the O-(pantetheine 4'-phosphoryl)serine mark. Residues 903 to 1171 (QDAFPCTSLQ…ITTVPVRIRL (269 aa)) are condensation 1. The tract at residues 1332–1740 (LETQAHSRPD…GRKDAQVKIR (409 aa)) is adenylation 2. Residues 1865 to 1941 (QPRTKLERQL…NLAQATGTQG (77 aa)) form the Carrier 2 domain. At Ser-1902 the chain carries O-(pantetheine 4'-phosphoryl)serine. Residues 1965-2249 (PAQLSPIQRL…FSTIFPVRVS (285 aa)) are condensation 2. Residues 2863–3255 (LAQPHEPAIC…ARKDAQIKIR (393 aa)) are adenylation 3. The 77-residue stretch at 3380–3456 (QPLSEAERKM…NVTHQAVAQL (77 aa)) folds into the Carrier 3 domain. Ser-3417 bears the O-(pantetheine 4'-phosphoryl)serine mark. The segment at 3496 to 3761 (DAFPCTPLQE…FATLPLRVRL (266 aa)) is condensation 3. Positions 3924–4321 (DRVRIHPNAP…GRKDDQVKLR (398 aa)) are adenylation 4. Residues 4439 to 4450 (ELAQARTAQQGP) show a composition bias toward polar residues. A disordered region spans residues 4439 to 4459 (ELAQARTAQQGPKRQPASEAE). The Carrier 4 domain occupies 4453–4529 (QPASEAERQM…EAATQAQMLG (77 aa)). Residue Ser-4490 is modified to O-(pantetheine 4'-phosphoryl)serine. Residues 4545-4837 (QSFAQARLWF…VNMQCLRVKI (293 aa)) are condensation 4. The segment at 5006–5405 (FRQQVAACAD…RRMDAQVKIR (400 aa)) is adenylation 5. Positions 5933 to 6009 (QPTSKTQRQL…DMAEGLPLAK (77 aa)) constitute a Carrier 5 domain. Ser-5970 bears the O-(pantetheine 4'-phosphoryl)serine mark. Residues 6023-6315 (VEQSFAQRRL…VNMQCIRIRV (293 aa)) are condensation 5. The adenylation 6 stretch occupies residues 6481-6766 (FRQQALLNPD…IINAYGPTEN (286 aa)). The 77-residue stretch at 7394-7470 (QPTTDMEREM…DLACHLSPEE (77 aa)) folds into the Carrier 6 domain. At Ser-7431 the chain carries O-(pantetheine 4'-phosphoryl)serine. The condensation 6 stretch occupies residues 7501–7771 (EDVLPLTSFQ…CLNIVPIRVN (271 aa)).

It belongs to the NRP synthetase family.

The protein operates within secondary metabolite biosynthesis. Its function is as follows. Nonribosomal peptide synthetase; part of the gene cluster that mediates the biosynthesis of destruxins, insecticidal cyclic hexadepsipeptides which induce flaccid paralysis and visceral muscle contraction in insects through targeting the calcium channels and vacuolar-type ATPases. The aldo-keto reductase dtxS3 converts alpha-ketoisocaproic acid from deaminated leucine into alpha-hydroxyisocaproic acid (HIC), which is the first substrate for destruxin assembly by dtxS1. L-aspartate decarboxylase dtxS4 converts aspartic acid into beta-alanine, the last substrate for the destruxin assembly line performed by dtxS1. The nonribosomal peptide synthetase dtxS1 synthesizes destruxins B and B2, whereas the cytochrome P450 monooxygenase dtxS2 is required to convert destruxin B into other destruxin derivatives, including destructins C, D, A and E. Destruxin E-diol (ED) is further produced in a non-enzymatic manner from destruxin E. Destruxins play an important role in virulence and escape from insect host immune defenses. The chain is Nonribosomal peptide synthetase dtxS1 from Metarhizium robertsii (strain ARSEF 23 / ATCC MYA-3075) (Metarhizium anisopliae (strain ARSEF 23)).